Here is a 334-residue protein sequence, read N- to C-terminus: GTP 3',8-cyclase (334 aa).

One can recognise a Radical SAM core domain in the interval 11–236; the sequence is GFNRKIDYLR…ESTESSMGPA (226 aa). Arg20 serves as a coordination point for GTP. 2 residues coordinate [4Fe-4S] cluster: Cys27 and Cys31. Tyr33 is a binding site for S-adenosyl-L-methionine. Residue Cys34 participates in [4Fe-4S] cluster binding. A GTP-binding site is contributed by Arg69. Gly73 lines the S-adenosyl-L-methionine pocket. A GTP-binding site is contributed by Thr100. An S-adenosyl-L-methionine-binding site is contributed by Ser124. Lys161 is a GTP binding site. Met195 contributes to the S-adenosyl-L-methionine binding site. Residues Cys260 and Cys263 each contribute to the [4Fe-4S] cluster site. 265–267 serves as a coordination point for GTP; sequence RVR. [4Fe-4S] cluster is bound at residue Cys277.

It belongs to the radical SAM superfamily. MoaA family. As to quaternary structure, monomer and homodimer. The cofactor is [4Fe-4S] cluster.

The catalysed reaction is GTP + AH2 + S-adenosyl-L-methionine = (8S)-3',8-cyclo-7,8-dihydroguanosine 5'-triphosphate + 5'-deoxyadenosine + L-methionine + A + H(+). The protein operates within cofactor biosynthesis; molybdopterin biosynthesis. Functionally, catalyzes the cyclization of GTP to (8S)-3',8-cyclo-7,8-dihydroguanosine 5'-triphosphate. The chain is GTP 3',8-cyclase from Pseudomonas putida (strain ATCC 47054 / DSM 6125 / CFBP 8728 / NCIMB 11950 / KT2440).